The sequence spans 339 residues: RNA 3'-terminal phosphate cyclase (339 aa).

ATP-binding positions include glutamine 103 and 283–287; that span reads HLADQ. Histidine 308 acts as the Tele-AMP-histidine intermediate in catalysis.

This sequence belongs to the RNA 3'-terminal cyclase family. Type 1 subfamily.

The protein resides in the cytoplasm. The catalysed reaction is a 3'-end 3'-phospho-ribonucleotide-RNA + ATP = a 3'-end 2',3'-cyclophospho-ribonucleotide-RNA + AMP + diphosphate. In terms of biological role, catalyzes the conversion of 3'-phosphate to a 2',3'-cyclic phosphodiester at the end of RNA. The mechanism of action of the enzyme occurs in 3 steps: (A) adenylation of the enzyme by ATP; (B) transfer of adenylate to an RNA-N3'P to produce RNA-N3'PP5'A; (C) and attack of the adjacent 2'-hydroxyl on the 3'-phosphorus in the diester linkage to produce the cyclic end product. The biological role of this enzyme is unknown but it is likely to function in some aspects of cellular RNA processing. The polypeptide is RNA 3'-terminal phosphate cyclase (Salmonella enteritidis PT4 (strain P125109)).